The primary structure comprises 203 residues: Pyridoxal 5'-phosphate synthase subunit PdxT (203 aa).

54 to 56 (GES) provides a ligand contact to L-glutamine. C86 functions as the Nucleophile in the catalytic mechanism. L-glutamine-binding positions include R113 and 141–142 (IR). Active-site charge relay system residues include H177 and E179.

Belongs to the glutaminase PdxT/SNO family. In the presence of PdxS, forms a dodecamer of heterodimers. Only shows activity in the heterodimer.

It carries out the reaction aldehydo-D-ribose 5-phosphate + D-glyceraldehyde 3-phosphate + L-glutamine = pyridoxal 5'-phosphate + L-glutamate + phosphate + 3 H2O + H(+). The catalysed reaction is L-glutamine + H2O = L-glutamate + NH4(+). Its pathway is cofactor biosynthesis; pyridoxal 5'-phosphate biosynthesis. Catalyzes the hydrolysis of glutamine to glutamate and ammonia as part of the biosynthesis of pyridoxal 5'-phosphate. The resulting ammonia molecule is channeled to the active site of PdxS. The chain is Pyridoxal 5'-phosphate synthase subunit PdxT from Halobacterium salinarum (strain ATCC 29341 / DSM 671 / R1).